Reading from the N-terminus, the 224-residue chain is MRHGTHTGSNPYAEAYVEVTAGGLAETDLAADPIEQFRRWLADAIRYNLPEPTAMVVATADADGRPSSRHVLLKSVDDGFVFFTNYRSRKGRDLSENPSASLCFPWFAIGRQVVVLGTVTKVTREETEEYFASRPRDSQCGAWSSENQSSVVPSRAWLDERYAEVAQRFAGVEHIPPPPFWGGFRVIPETVEFWQARPARMHDRLRYRRTADGERPWIIERLSP.

Residues 69–74 (RHVLLK), 83–84 (FT), Arg89, Lys90, and Gln112 each bind FMN. Lys74 is a substrate binding site. Residues Tyr130, Arg134, and Ser138 each contribute to the substrate site. FMN contacts are provided by residues 148-149 (QS) and Trp194. 200–202 (RMH) is a substrate binding site. Position 204 (Arg204) interacts with FMN.

This sequence belongs to the pyridoxamine 5'-phosphate oxidase family. Homodimer. Requires FMN as cofactor.

It carries out the reaction pyridoxamine 5'-phosphate + O2 + H2O = pyridoxal 5'-phosphate + H2O2 + NH4(+). The catalysed reaction is pyridoxine 5'-phosphate + O2 = pyridoxal 5'-phosphate + H2O2. The protein operates within cofactor metabolism; pyridoxal 5'-phosphate salvage; pyridoxal 5'-phosphate from pyridoxamine 5'-phosphate: step 1/1. It participates in cofactor metabolism; pyridoxal 5'-phosphate salvage; pyridoxal 5'-phosphate from pyridoxine 5'-phosphate: step 1/1. In terms of biological role, catalyzes the oxidation of either pyridoxine 5'-phosphate (PNP) or pyridoxamine 5'-phosphate (PMP) into pyridoxal 5'-phosphate (PLP). This Acidothermus cellulolyticus (strain ATCC 43068 / DSM 8971 / 11B) protein is Pyridoxine/pyridoxamine 5'-phosphate oxidase.